We begin with the raw amino-acid sequence, 623 residues long: Protein EDS1 (623 aa).

A2 bears the N-acetylalanine mark. Residue S123 is the Nucleophile of the active site. Active-site charge relay system residues include D187 and H317. Positions 358–383 (VQAALEEEKKRVENQKKIIQVIEQER) form a coiled coil.

Homodimer. Interacts with RPS4, RPS6, SNC1, SRFR1, AvrRps4 and HopA1. Part of a nuclear complex made of EDS1, PAD4 and SAG101, that can be redirected to the cytoplasm in the presence of an extranuclear form of EDS1. Interacts (via N-terminus) with PAD4 (via N-terminus). Interacts (via N-terminus) with SAG101. EDS1-SAG101 and EDS1-PAD4 form separate complexes in pathogen-unchallenged cells. Part of a nuclear protein complex made of VICTR, PAD4 and EDS1. Interacts with VICTR.

Its subcellular location is the nucleus. It localises to the cytoplasm. It is found in the microsome. In terms of biological role, positive regulator of basal resistance and of effector-triggered immunity specifically mediated by TIR-NB-LRR (TNL) resistance proteins. Disruption by bacterial effector of EDS1-TIR-NB-LRR resistance protein interactions constitutes the first step in resistance activation. Acts redundantly with salicylic acid to regulate resistance gene-mediated signaling. Triggers early plant defenses and hypersensitive response independently of PAD4, and then recruits PAD4 to potentiate plant defenses through the accumulation of salicylic acid. Nuclear localization is essential for basal and TNL-conditioned immunity and for reprogramming defense gene expression, while cytoplasmic EDS1 is required to induce a complete immune response. Heterodimerization with PAD4 and/or SGA101 is necessary for TNL-mediated effector-triggered immunity. Contributes to nonhost resistance against E.amylovora. Loss of EDS1-PAD4 interaction compromises basal but not TNL-triggered resistance. Necessary for systemic acquired resistance (SAR) signal generation and perception. Has no direct lipase activity. Putative lipase activity is dispensable for immune functions. This Arabidopsis thaliana (Mouse-ear cress) protein is Protein EDS1.